The following is a 327-amino-acid chain: MDLYPEENTQSEQSQNSENNMQIFKSENSDGFSSDLMISNDQLKNISKTQLTLEKEKIFKMPNVLSQVMKKAFSRKNEILYCVSTKELSVDIHDATGKVYLPLITKEEINKRLSSLKPEVRKTMSMVHLGAVKILLKAQFRNGIDTPIKIALIDDRINSRRDCLLGAAKGNLAYGKFMFTVYPKFGISLNTQRLNQTLSLIHDFENKNLMNKGDKVMTITYVVGYALTNSHHSIDYQSNATIELEDVFQEIGNVQQSEFCTIQNDECNWAIDIAQNKALLGAKTKTQIGNNLQIGNSASSSNTENELARVSQNIDLLKNKLKEICGE.

Residues 297–327 (SASSSNTENELARVSQNIDLLKNKLKEICGE) are a coiled coil.

The protein belongs to the caulimoviridae movement protein family. In terms of assembly, homotrimer, through the coiled-coil domain. Interacts with VAP. May interact (via N-terminus) with host prenylated Rab acceptor protein 1D (PRA1D).

Its subcellular location is the host cell junction. The protein resides in the host plasmodesma. Transports viral genome to neighboring plant cells directly through plasmosdesmata, without any budding. The movement protein allows efficient cell to cell propagation, by bypassing the host cell wall barrier. Acts by forming tubules structures that increase the size exclusion limit (SEL) of plasmodesmata, thereby allowing viral ribonucleocapsids to spread directly to neighboring cells. In Cauliflower mosaic virus (strain Strasbourg) (CaMV), this protein is Movement protein.